The sequence spans 161 residues: SsrA-binding protein (161 aa).

It belongs to the SmpB family.

It is found in the cytoplasm. Required for rescue of stalled ribosomes mediated by trans-translation. Binds to transfer-messenger RNA (tmRNA), required for stable association of tmRNA with ribosomes. tmRNA and SmpB together mimic tRNA shape, replacing the anticodon stem-loop with SmpB. tmRNA is encoded by the ssrA gene; the 2 termini fold to resemble tRNA(Ala) and it encodes a 'tag peptide', a short internal open reading frame. During trans-translation Ala-aminoacylated tmRNA acts like a tRNA, entering the A-site of stalled ribosomes, displacing the stalled mRNA. The ribosome then switches to translate the ORF on the tmRNA; the nascent peptide is terminated with the 'tag peptide' encoded by the tmRNA and targeted for degradation. The ribosome is freed to recommence translation, which seems to be the essential function of trans-translation. The protein is SsrA-binding protein of Vibrio parahaemolyticus serotype O3:K6 (strain RIMD 2210633).